Here is a 2280-residue protein sequence, read N- to C-terminus: MRQSVTSSSSCSKLYAIKATISLPRLFYRRLRTMAPRVASHFLGGNSLDKAPAGKVKDYIASHGGHTVITSILIANNGIAAVKEIRSIRKWAYETFNNERAIKFTVMATPDDLKVNADYIRMADQYVEVPGGSNNNNYANVELIVDIAERMNVHAVWAGWGHASENPKLPEMLSASSKKIVFIGPPGSAMRSLGDKISSTIVAQSARVPCMSWSGNELDQVRIDEETNIVTVDDDVYQKACIRSAEEGIAVAEKIGYPVMIKASEGGGGKGIRQVTSTEKFAQAFQQVLDELPGSPVFVMKLAGQARHLEVQILADQYGNNISLFGRDCSVQRRHQKIIEEAPVTIAPAATFHEMERAAVRLGELVGYASAGTIEYLYEPENDRFYFLELNPRLQVEHPTTEMVSGVNLPAAQLQVAMGLPLSRIPHIRELYGLPRDGDSEIDFFFQNPESFKVQKVPTPKGHCVACRITSEDPGEGFKPSSGMIKDLNFRSSSNVWGYFSVGTAGGIHEFADSQFGHIFSFAESRESSRKSMVVALKELSIRGDFRTTVEYLVRLLETKEFSENEFTTGWLDRLIAQKVTSARPDKMLAVVCGALVRAHATADTQYRAFKSYLERGQVPSREFLKNVYDIEFIYDNTRYRFTASRSSPGSYHLFLNGSRCTAGVRSLTDGGLLVLLNGHSYTVYYRDEVTGTRISIDNLSCMLEQENDPTQLRTPSPGKLVRFLVETGEHIKAGEAYAEVEVMKMIMPLVATEDGVVQLIKQPGASLDAGDILGILTLDDPSRVTHALPFDGQLPNWGEPQIAGNKPCQRYHALLCILLDILKGYDNQIILNSTYNEFVEVLRNHELPYSEWSAHYSALVNRISPVLDKLFVSIIEKARSRKAEFPAKQLEVAIQTYCDGQNLATTQQLKVQIAPLLKIISDYKDGLKVHEYNVIKGLLEEYYNVEKLFSGINKREEDVILRLRDENKDDVDKVIALALSHSRIGSKNNLLITILDLMKSEPSTFVSLYFNDILRKLTDLDSRVTSKVSLKARELLITCAMPSLNERFSQMEHILKSSVVESHYGDAKFSHRTPSLDILKELIDSKYTVFDVLPAFFCHTDPWVSLAALEVYVRRAYRAYSVLEINYHTEAGTPYVLTWRFQLHSSGAPGLGANSTNGSNFPASTTPSYENSNRRLQSVSDLSWYVNKTDSEPFRFGTMIAAETFDELENNLALAIDRLPLSRNYFNAGLTLDGNSSSANDNTQELTNVVNVALTSTGDLDDSAIVSKLNQILSDFRDDLLEHNVRRVTIVGGRINKSAYPSYYTYRVSAEQKDGNLVHYNEDERIRHIEPALAFQLELGRLSNFNIEPVFTDNHNIHVYRATAKNMDTDKRFFTRALVRPGRLRDEIPTAEYLISETHRLINDILDALEVIGHEQTDLNHIFINFTPAFGLAPKQVEAALGGFLERFGRRLWRLRVTAAEIRIICTDPSTNTLFPLRVIISNVSGFVVNVEIYAEVKTENNSWIFKSIGQPGSMHLRPISTPYPTKEWLQPRRYKAQLMGTTFVYDFPELFRRAFTDSWKKVPNGRSKVTIPQNMFECKELVADEHGVLQEVNREPGTNSCGMVAWCITVKTPEYPNGRKIIVVANDITFQIGSFGPQEDEYFYKVTQLARQRGIPRIYLAANSGARIGVADEIVPLFNIAWVDPDSPEKGFDYIYLTPEAYERLQKENPNILTTEEVVTETGELRHKITTIIGSSEGLGVECLRGSGLIAGVTSRAYNDIFTCTLVTCRAVGIGAYLVRLGQRAVQIEGQPIILTGAPALNKVLGREVYTSNLQLGGTQVMHRNGISHLTSQDDFDGISKIVNWISYIPDKRNNPVPISPSSDTWDRDVEFYPSQNGYDPRWLIAGKEDEDSFLYGLFDKGSFQETLNGWAKTVVVGRARMGGIPTGVIAVETRTIENTVPADPANPDSTEQVLMEAGQVWYPNSAFKTAQAINDFNHGEQLPLFILANWRGFSGGQRDMFNEVLKYGSYIVDALASYKQPVFVYIPPFSELRGGSWVVVDPTINEDQMEMYADEESRAGVLEPEGMVSIKFRREKLLSLMRRCDHKYASLCNELKRDDLSADDLSTIKVKLMEREQKLMPIYQQISIHFADLHDRVGRMVAKKVVRKPLKWTEARRFFYWRLRRRLNEHYALQKITQLIPSLTIRESREYLQKWYEEWCGKQDWDESDKSVVCWIEEHNDDLSKRTQELKSTYYSERLSKLLRSDRKGMIDSLAQVLTELDENEKKELAGKLASVN.

The Biotin carboxylation domain occupies 68–577 (VITSILIANN…TTGWLDRLIA (510 aa)). Residues 226–418 (ETNIVTVDDD…LPAAQLQVAM (193 aa)) enclose the ATP-grasp domain. 266-271 (GGGGKG) lines the ATP pocket. The Mn(2+) site is built by glutamate 375, glutamate 389, and asparagine 391. Arginine 393 is a catalytic residue. The Biotinyl-binding domain maps to 704-778 (LEQENDPTQL…DAGDILGILT (75 aa)). N6-biotinyllysine is present on lysine 745. A phosphoserine mark is found at serine 1179 and serine 1181. The 340-residue stretch at 1524–1863 (PYPTKEWLQP…KRNNPVPISP (340 aa)) folds into the CoA carboxyltransferase N-terminal domain. The segment at 1524–2181 (PYPTKEWLQP…EHYALQKITQ (658 aa)) is carboxyltransferase. Residues arginine 1772, lysine 2074, and arginine 2076 each coordinate CoA. One can recognise a CoA carboxyltransferase C-terminal domain in the interval 1867–2181 (TWDRDVEFYP…EHYALQKITQ (315 aa)).

Interacts with sad1. Requires biotin as cofactor. Mn(2+) is required as a cofactor.

The protein resides in the cytoplasm. It catalyses the reaction hydrogencarbonate + acetyl-CoA + ATP = malonyl-CoA + ADP + phosphate + H(+). The catalysed reaction is N(6)-biotinyl-L-lysyl-[protein] + hydrogencarbonate + ATP = N(6)-carboxybiotinyl-L-lysyl-[protein] + ADP + phosphate + H(+). Its pathway is lipid metabolism; malonyl-CoA biosynthesis; malonyl-CoA from acetyl-CoA: step 1/1. By phosphorylation. In terms of biological role, carries out three functions: biotin carboxyl carrier protein, biotin carboxylase and carboxyltransferase. The polypeptide is Acetyl-CoA carboxylase (cut6) (Schizosaccharomyces pombe (strain 972 / ATCC 24843) (Fission yeast)).